Reading from the N-terminus, the 1439-residue chain is Fanconi anemia group D2 protein (1439 aa).

K563 is covalently cross-linked (Glycyl lysine isopeptide (Lys-Gly) (interchain with G-Cter in ubiquitin)).

Belongs to the Fanconi anemia protein FANCD2 family. In terms of assembly, homodimer; cannot be ubiquitinated and does not bind DNA. Part of a FANCI-FANCD2 heterodimeric complex that binds and scans dsDNA for DNA damage. Interacts directly with FANCE and FANCI. Interacts with USP1 and MEN1. The ubiquitinated form specifically interacts with BRCA1 and BLM. Both the nonubiquitinated and the monoubiquitinated forms interact with BRCA2; this interaction is mediated by phosphorylated FANCG and the complex also includes XCCR3. The ubiquitinated form specifically interacts with MTMR15/FAN1 (via UBZ-type zinc finger), leading to recruit MTMR15/FAN1 to sites of DNA damage. Interacts with DCLRE1B/Apollo. Interacts with POLN. Interacts with UHRF1 and UHRF2; these interactions promote FANCD2 activation. Post-translationally, monoubiquitinated on Lys-563 during S phase and upon genotoxic stress. Deubiquitinated by USP1 as cells enter G2/M, or once DNA repair is completed. Monoubiquitination prevents DNA release from the FANCI-FANCD2 complex. FANCD2 is only ubiquitinated in the FANCI-FANCD2 complex and the monoubiquitination of FANCD2 is promoted by phosphorylation of FANCI. Phosphorylated in response to various genotoxic stresses by ATM and/or ATR.

It localises to the nucleus. Functionally, required for maintenance of chromosomal stability. Promotes accurate and efficient pairing of homologs during meiosis. Involved in the repair of DNA double-strand breaks, both by homologous recombination and single-strand annealing. The FANCI-FANCD2 complex binds and scans double-stranded DNA (dsDNA) for DNA damage; this complex stalls at DNA junctions between double-stranded DNA and single-stranded DNA. May participate in S phase and G2 phase checkpoint activation upon DNA damage. Plays a role in preventing breakage and loss of missegregating chromatin at the end of cell division, particularly after replication stress. Required for the targeting, or stabilization, of BLM to non-centromeric abnormal structures induced by replicative stress. Promotes BRCA2/FANCD1 loading onto damaged chromatin. May also be involved in B-cell immunoglobulin isotype switching. The protein is Fanconi anemia group D2 protein of Gallus gallus (Chicken).